Reading from the N-terminus, the 349-residue chain is Homeobox-leucine zipper protein HOX7 (349 aa).

The tract at residues 42-186 is disordered; sequence RATRRDEQDD…PKQKSDLANR (145 aa). Polar residues-rich tracts occupy residues 89-99 and 121-135; these read SAETGSANSEM and SSPS…RQQV. A DNA-binding region (homeobox) is located at residues 150 to 209; it reads GARKKLRLSKEQSSFLEDSFKEHSTLTPKQKSDLANRLNLRPRQVEVWFQNRRARTKLKQ. Over residues 167-183 the composition is skewed to basic and acidic residues; sequence DSFKEHSTLTPKQKSDL. The segment at 208–252 is leucine-zipper; that stretch reads KQTEVDCEHLKRCCERLTRENRRLQREVAELRGALRTTTSSYPPL.

The protein belongs to the HD-ZIP homeobox family. Class II subfamily. As to quaternary structure, homodimer. May form a heterodimer with HOX1, HOX2 or HOX3. Expressed in seedlings, roots, leaves, nodes, internodes, flowers and embryo.

The protein localises to the nucleus. In terms of biological role, probable transcription factor that binds to the DNA sequence 5'-CAAT[GC]ATTG-3'. The protein is Homeobox-leucine zipper protein HOX7 (HOX7) of Oryza sativa subsp. indica (Rice).